Here is a 263-residue protein sequence, read N- to C-terminus: Putative TATA-binding protein pB263R (263 aa).

It belongs to the asfivirus B263R family.

Its function is as follows. Putative TATA-binding protein. The polypeptide is Putative TATA-binding protein pB263R (Ornithodoros (relapsing fever ticks)).